Reading from the N-terminus, the 248-residue chain is Tryptophan synthase alpha chain (248 aa).

Catalysis depends on proton acceptor residues Glu36 and Asp47.

It belongs to the TrpA family. Tetramer of two alpha and two beta chains.

It catalyses the reaction (1S,2R)-1-C-(indol-3-yl)glycerol 3-phosphate + L-serine = D-glyceraldehyde 3-phosphate + L-tryptophan + H2O. It participates in amino-acid biosynthesis; L-tryptophan biosynthesis; L-tryptophan from chorismate: step 5/5. Functionally, the alpha subunit is responsible for the aldol cleavage of indoleglycerol phosphate to indole and glyceraldehyde 3-phosphate. The sequence is that of Tryptophan synthase alpha chain from Archaeoglobus fulgidus (strain ATCC 49558 / DSM 4304 / JCM 9628 / NBRC 100126 / VC-16).